A 323-amino-acid chain; its full sequence is Calcium homeostasis modulator protein 2 (323 aa).

The Cytoplasmic segment spans residues 1–21; that stretch reads MAALIAENFRFLSLFFKSKDV. A central pore region spans residues 14-39; the sequence is LFFKSKDVMIFNGLVALGTVGSQELF. Residues 22 to 43 form a helical membrane-spanning segment; it reads MIFNGLVALGTVGSQELFSVVA. The Extracellular segment spans residues 44–52; sequence FHCPCSPAR. 2 disulfide bridges follow: C46–C130 and C48–C162. The helical transmembrane segment at 53–76 threads the bilayer; the sequence is NYLYGLTAIGVPALALFLIGVILN. At 77–101 the chain is on the cytoplasmic side; that stretch reads NHTWNLVAECQYRRAKNCSAAPTFL. The chain crosses the membrane as a helical span at residues 102-132; that stretch reads LLSSILGRAAVAPVTWSVISLLRGEAYVCAL. Over 133 to 179 the chain is Extracellular; the sequence is SEFVDPSSLTAGDEGFPPDHATEILARFPCGEGPANLSGFREEVSRR. A hemichannel docking region spans residues 145–152; it reads DEGFPPDH. Residues 180-206 form a helical membrane-spanning segment; the sequence is LKYESQLFGWLLIGVVAILVFLTKCFK. At 207 to 323 the chain is on the cytoplasmic side; it reads HYCSPLSYRQ…DNVEMALLTV (117 aa). The segment at 214–251 is intersubunit interaction; it reads YRQEAYWAQYRTNEDQLFQRTAEVHSRVLAANNVRRFF.

This sequence belongs to the CALHM family. In terms of assembly, homo-undecamer. Two undecameric hemichannels can assemble in a head-to-head manner to form a gap junction.

It is found in the cell membrane. It carries out the reaction ATP(in) = ATP(out). Pore-forming subunit of Ca(2+) homeostasis modulator channels. Mediates ATP release from astrocytes and ATP-induced Ca(2+) influx in microglia thus regulating neuronal ATP and Ca(2+) homeostasis, synaptic transmission and neuroinflammatory response. May form intercellular gap junctions. The gating mechanism remains unknown. The sequence is that of Calcium homeostasis modulator protein 2 (Calhm2) from Rattus norvegicus (Rat).